A 516-amino-acid polypeptide reads, in one-letter code: GMP synthase [glutamine-hydrolyzing] (516 aa).

Residues 8–198 (KILILDFGSQ…VVNICGCDTL (191 aa)) enclose the Glutamine amidotransferase type-1 domain. The active-site Nucleophile is the Cys-84. Active-site residues include His-172 and Glu-174. One can recognise a GMPS ATP-PPase domain in the interval 199–391 (WNIENIIEND…LGLPYNMLYR (193 aa)). 226 to 232 (SGGVDSS) contacts ATP.

As to quaternary structure, homodimer.

The enzyme catalyses XMP + L-glutamine + ATP + H2O = GMP + L-glutamate + AMP + diphosphate + 2 H(+). It functions in the pathway purine metabolism; GMP biosynthesis; GMP from XMP (L-Gln route): step 1/1. Functionally, catalyzes the synthesis of GMP from XMP. This is GMP synthase [glutamine-hydrolyzing] from Francisella tularensis subsp. mediasiatica (strain FSC147).